Here is a 340-residue protein sequence, read N- to C-terminus: Probable complex I intermediate-associated protein 30, mitochondrial (340 aa).

Belongs to the CIA30 family.

It localises to the mitochondrion. Functionally, chaperone protein involved in the assembly of the mitochondrial NADH:ubiquinone oxidoreductase complex (complex I). Required for normal growth and reproduction. This chain is Probable complex I intermediate-associated protein 30, mitochondrial (nuaf-1), found in Caenorhabditis briggsae.